A 206-amino-acid chain; its full sequence is dITP/XTP pyrophosphatase (206 aa).

7-12 (SSHGYK) lines the substrate pocket. The active-site Proton acceptor is the Asp-70. Position 70 (Asp-70) interacts with Mg(2+). Substrate contacts are provided by residues Thr-71, 154 to 157 (FGYD), Lys-177, and 182 to 183 (HR).

Belongs to the HAM1 NTPase family. Homodimer. It depends on Mg(2+) as a cofactor.

The catalysed reaction is XTP + H2O = XMP + diphosphate + H(+). It catalyses the reaction dITP + H2O = dIMP + diphosphate + H(+). It carries out the reaction ITP + H2O = IMP + diphosphate + H(+). Functionally, pyrophosphatase that catalyzes the hydrolysis of nucleoside triphosphates to their monophosphate derivatives, with a high preference for the non-canonical purine nucleotides XTP (xanthosine triphosphate), dITP (deoxyinosine triphosphate) and ITP. Seems to function as a house-cleaning enzyme that removes non-canonical purine nucleotides from the nucleotide pool, thus preventing their incorporation into DNA/RNA and avoiding chromosomal lesions. The polypeptide is dITP/XTP pyrophosphatase (Chlamydia pneumoniae (Chlamydophila pneumoniae)).